A 25-amino-acid chain; its full sequence is Omega-conotoxin CVIB (25 aa).

3 disulfide bridges follow: cysteine 1-cysteine 16, cysteine 8-cysteine 20, and cysteine 15-cysteine 25. Cysteine 25 is subject to Cysteine amide.

The protein belongs to the conotoxin O1 superfamily. As to expression, expressed by the venom duct.

The protein resides in the secreted. Omega-conotoxins act at presynaptic membranes, they bind and block voltage-gated calcium channels (Cav). This toxin blocks N-, P- and Q-type calcium channels. It shows high activities on Cav2.1/CACNA1A (IC(50)=11 nM) and Cav2.2/CACNA1B (IC(50)=7.7 nM). In addition, it shows a higher potency when Cav2.2/CACNA1B is only expressed with the ancillary subunit CACNB3 (IC(50)=1.6 nM) than on Cav2.2/CACNA1B expressed with the ancillary subunits CACNA2D1 and CACNB3 (IC(50)=12 nM). Both the Cav2.2/CACNA1B block by this toxin and the recovery are voltage-independent. It is noteworthy that ancillary subunits beta do not modulate recovery from this toxin block, since Cav2.2/CACNA1B expressed with either the ancillary subunit CACNB2a (isoform 2a) or with CACNB3 exhibits moderate recovery. This is Omega-conotoxin CVIB from Conus catus (Cat cone).